The following is a 232-amino-acid chain: U2 small nuclear ribonucleoprotein B'' (232 aa).

One can recognise an RRM 1 domain in the interval 10–89 (QTVYLRNLNE…KRMRVQYAKT (80 aa)). Residues 90 to 159 (RSDCLATEDG…QEPPAPPNNI (70 aa)) form a disordered region. Over residues 108–123 (KKQEEKAAEKKRRAEE) the composition is skewed to basic and acidic residues. Residues 127-151 (SGPNAAAQSNGTGYQASRLGKTSQE) show a composition bias toward polar residues. An RRM 2 domain is found at 158-232 (NILFIQNLPA…NPMAISYAKK (75 aa)).

Belongs to the RRM U1 A/B'' family. In terms of assembly, component of the spliceosome where it is associated with snRNP U2.

It is found in the nucleus. The protein resides in the cajal body. Its subcellular location is the nucleoplasm. The protein localises to the cytoplasm. In terms of biological role, involved in nuclear pre-mRNA splicing. This is U2 small nuclear ribonucleoprotein B'' from Oryza sativa subsp. japonica (Rice).